A 338-amino-acid chain; its full sequence is Transcription factor GRA2 (338 aa).

2 disordered regions span residues 171 to 230 and 256 to 277; these read CQDS…PHYA and TQHEQRLPGTNEDLAEGDDGGS. A compositionally biased stretch (polar residues) spans 174-203; the sequence is SGVSQPSNLADDTLGQGQPVSTVVQPQHPG. Residues 223–236 are basic motif; that stretch reads KRQRPHYAIEKRYR. Positions 223–303 constitute a bHLH domain; that stretch reads KRQRPHYAIE…NQATLCIRQL (81 aa). The interval 237-303 is helix-loop-helix motif; it reads AGLQERFEAL…NQATLCIRQL (67 aa).

The protein resides in the nucleus. Transcription factor that specifically regulates the expression of the gene cluster that mediates the biosynthesis of gramillins A and B, bicyclic lipopeptides that induce cell death in maize leaves but not in wheat leaves. This Gibberella zeae (strain ATCC MYA-4620 / CBS 123657 / FGSC 9075 / NRRL 31084 / PH-1) (Wheat head blight fungus) protein is Transcription factor GRA2 (GRA2).